The primary structure comprises 237 residues: Ubiquinone biosynthesis O-methyltransferase (237 aa).

Residues R38, G58, D79, and M124 each coordinate S-adenosyl-L-methionine.

This sequence belongs to the methyltransferase superfamily. UbiG/COQ3 family.

It carries out the reaction a 3-demethylubiquinol + S-adenosyl-L-methionine = a ubiquinol + S-adenosyl-L-homocysteine + H(+). The enzyme catalyses a 3-(all-trans-polyprenyl)benzene-1,2-diol + S-adenosyl-L-methionine = a 2-methoxy-6-(all-trans-polyprenyl)phenol + S-adenosyl-L-homocysteine + H(+). It participates in cofactor biosynthesis; ubiquinone biosynthesis. In terms of biological role, O-methyltransferase that catalyzes the 2 O-methylation steps in the ubiquinone biosynthetic pathway. The protein is Ubiquinone biosynthesis O-methyltransferase of Acinetobacter baumannii (strain ACICU).